The sequence spans 275 residues: Large ribosomal subunit protein uL2 (275 aa).

Residues 222–275 form a disordered region; the sequence is GVAMNPVDHPHGGGEGRNKGRHPTSPWGQKSKGLKTRNNKRTDSMIIRRRAKKK. Residues 229-239 show a composition bias toward basic and acidic residues; the sequence is DHPHGGGEGRN.

The protein belongs to the universal ribosomal protein uL2 family. In terms of assembly, part of the 50S ribosomal subunit. Forms a bridge to the 30S subunit in the 70S ribosome.

Its function is as follows. One of the primary rRNA binding proteins. Required for association of the 30S and 50S subunits to form the 70S ribosome, for tRNA binding and peptide bond formation. It has been suggested to have peptidyltransferase activity; this is somewhat controversial. Makes several contacts with the 16S rRNA in the 70S ribosome. The chain is Large ribosomal subunit protein uL2 from Psychrobacter arcticus (strain DSM 17307 / VKM B-2377 / 273-4).